Reading from the N-terminus, the 431-residue chain is Trigger factor (431 aa).

The PPIase FKBP-type domain maps to 163–248 (GDTVVIDYAG…IHEVKGKELP (86 aa)).

The protein belongs to the FKBP-type PPIase family. Tig subfamily.

It localises to the cytoplasm. The enzyme catalyses [protein]-peptidylproline (omega=180) = [protein]-peptidylproline (omega=0). Involved in protein export. Acts as a chaperone by maintaining the newly synthesized protein in an open conformation. Functions as a peptidyl-prolyl cis-trans isomerase. The protein is Trigger factor of Latilactobacillus sakei subsp. sakei (strain 23K) (Lactobacillus sakei subsp. sakei).